Here is a 445-residue protein sequence, read N- to C-terminus: tRNA-2-methylthio-N(6)-dimethylallyladenosine synthase (445 aa).

The region spanning lysine 3–arginine 124 is the MTTase N-terminal domain. Residues cysteine 12, cysteine 48, cysteine 87, cysteine 162, cysteine 166, and cysteine 169 each contribute to the [4Fe-4S] cluster site. Residues tyrosine 148–alanine 380 enclose the Radical SAM core domain. Residues glutamate 383 to leucine 445 enclose the TRAM domain.

The protein belongs to the methylthiotransferase family. MiaB subfamily. As to quaternary structure, monomer. It depends on [4Fe-4S] cluster as a cofactor.

It localises to the cytoplasm. The catalysed reaction is N(6)-dimethylallyladenosine(37) in tRNA + (sulfur carrier)-SH + AH2 + 2 S-adenosyl-L-methionine = 2-methylsulfanyl-N(6)-dimethylallyladenosine(37) in tRNA + (sulfur carrier)-H + 5'-deoxyadenosine + L-methionine + A + S-adenosyl-L-homocysteine + 2 H(+). Its function is as follows. Catalyzes the methylthiolation of N6-(dimethylallyl)adenosine (i(6)A), leading to the formation of 2-methylthio-N6-(dimethylallyl)adenosine (ms(2)i(6)A) at position 37 in tRNAs that read codons beginning with uridine. This Rickettsia typhi (strain ATCC VR-144 / Wilmington) protein is tRNA-2-methylthio-N(6)-dimethylallyladenosine synthase.